Reading from the N-terminus, the 110-residue chain is Chagasin (110 aa).

The short motif at 29–34 (NPTTGF) is the BC loop element. The DE loop motif lies at 59-68 (PPDSKLLGAG). The FG loop signature appears at 91–100 (RPWTGPSHDS).

This sequence belongs to the protease inhibitor I42 family. In terms of assembly, interacts with cruzipain.

The protein resides in the flagellar pocket. It is found in the cytoplasmic vesicle. The protein localises to the cell surface. In terms of biological role, cysteine protease inhibitor. Inhibits cysteine protease cruzipain. This chain is Chagasin (cha), found in Trypanosoma cruzi.